The following is a 311-amino-acid chain: Transcription factor bHLH145 (311 aa).

The 50-residue stretch at 253 to 302 folds into the bHLH domain; the sequence is FLKRSKLSSNKIGEEKIFETVSLLRSVVPGEELVDPILVIDRAIDYLKSL.

Homodimer.

Its subcellular location is the nucleus. The sequence is that of Transcription factor bHLH145 (BHLH145) from Arabidopsis thaliana (Mouse-ear cress).